The following is a 320-amino-acid chain: Methionyl-tRNA formyltransferase (320 aa).

114-117 (SLLP) provides a ligand contact to (6S)-5,6,7,8-tetrahydrofolate.

Belongs to the Fmt family.

It catalyses the reaction L-methionyl-tRNA(fMet) + (6R)-10-formyltetrahydrofolate = N-formyl-L-methionyl-tRNA(fMet) + (6S)-5,6,7,8-tetrahydrofolate + H(+). In terms of biological role, attaches a formyl group to the free amino group of methionyl-tRNA(fMet). The formyl group appears to play a dual role in the initiator identity of N-formylmethionyl-tRNA by promoting its recognition by IF2 and preventing the misappropriation of this tRNA by the elongation apparatus. The protein is Methionyl-tRNA formyltransferase of Acinetobacter baumannii (strain AB307-0294).